The sequence spans 673 residues: DNA ligase (673 aa).

NAD(+) contacts are provided by residues 35-39, 84-85, and E115; these read DAQYD and SL. K117 functions as the N6-AMP-lysine intermediate in the catalytic mechanism. NAD(+) contacts are provided by R138, E178, K294, and K318. 4 residues coordinate Zn(2+): C412, C415, C430, and C435. The region spanning 594–673 is the BRCT domain; sequence LQSDRLAGKS…DELHALLVDE (80 aa).

The protein belongs to the NAD-dependent DNA ligase family. LigA subfamily. Mg(2+) is required as a cofactor. Mn(2+) serves as cofactor.

The enzyme catalyses NAD(+) + (deoxyribonucleotide)n-3'-hydroxyl + 5'-phospho-(deoxyribonucleotide)m = (deoxyribonucleotide)n+m + AMP + beta-nicotinamide D-nucleotide.. In terms of biological role, DNA ligase that catalyzes the formation of phosphodiester linkages between 5'-phosphoryl and 3'-hydroxyl groups in double-stranded DNA using NAD as a coenzyme and as the energy source for the reaction. It is essential for DNA replication and repair of damaged DNA. The sequence is that of DNA ligase from Herpetosiphon aurantiacus (strain ATCC 23779 / DSM 785 / 114-95).